The following is a 338-amino-acid chain: Nicotinate-nucleotide--dimethylbenzimidazole phosphoribosyltransferase (338 aa).

Glu-305 functions as the Proton acceptor in the catalytic mechanism.

Belongs to the CobT family.

It carries out the reaction 5,6-dimethylbenzimidazole + nicotinate beta-D-ribonucleotide = alpha-ribazole 5'-phosphate + nicotinate + H(+). It participates in nucleoside biosynthesis; alpha-ribazole biosynthesis; alpha-ribazole from 5,6-dimethylbenzimidazole: step 1/2. Functionally, catalyzes the synthesis of alpha-ribazole-5'-phosphate from nicotinate mononucleotide (NAMN) and 5,6-dimethylbenzimidazole (DMB). The sequence is that of Nicotinate-nucleotide--dimethylbenzimidazole phosphoribosyltransferase from Sinorhizobium medicae (strain WSM419) (Ensifer medicae).